A 1134-amino-acid polypeptide reads, in one-letter code: Nck-associated protein 1-like (1134 aa).

The interval 638 to 671 is disordered; sequence KAKNKKSMKQRQAPRKGEPERDKPGAESHRKNRS. The span at 639-651 shows a compositional bias: basic residues; it reads AKNKKSMKQRQAP. Positions 652-666 are enriched in basic and acidic residues; it reads RKGEPERDKPGAESH. The chain crosses the membrane as a helical span at residues 999-1019; sequence LLLIFLAVSLPLLATDPSSFF.

In terms of assembly, in hematopoietic cells, component of the WAVE2 complex composed of ABI1, CYFIP1/SRA1, NCKAP1L/HEM1 and WASF2/WAVE2. Interacts with ARHGAP4, PIK3C3/VPS34 and PPP1R12A/MYPT1. Interacts with mammalian target of rapamycin complex 2 (mTORC2) components, including MTOR and RICTOR. As to expression, predominantly expressed in developing and mature hematopoietic cells. Also detected in urogenital tissues, including testis.

The protein localises to the membrane. It localises to the cytoplasm. Its function is as follows. Essential hematopoietic-specific regulator of the actin cytoskeleton. Controls lymphocyte development, activation, proliferation and homeostasis, erythrocyte membrane stability, as well as phagocytosis and migration by neutrophils and macrophages. Component of the WAVE2 complex which signals downstream of RAC to stimulate F-actin polymerization. Required for stabilization and/or translation of the WAVE2 complex proteins in hematopoietic cells. Within the WAVE2 complex, enables the cortical actin network to restrain excessive degranulation and granule release by T-cells. Required for efficient T-lymphocyte and neutrophil migration. Exhibits complex cycles of activation and inhibition to generate waves of propagating the assembly with actin. Also involved in mechanisms WAVE independent to regulate myosin and actin polymerization during neutrophil chemotaxis. In T-cells, required for proper mechanistic target of rapamycin complex 2 (mTORC2)-dependent AKT phosphorylation, cell proliferation and cytokine secretion, including that of IL2 and TNF. This is Nck-associated protein 1-like from Mus musculus (Mouse).